Here is a 683-residue protein sequence, read N- to C-terminus: Synaptic vesicle glycoprotein 2B (683 aa).

Residues 1–42 (MDDYKYQDNYGGYAPSDGYYRGNESNPEEDAQSDVTEGHDEE) are disordered. Residues 1-108 (MDDYKYQDNY…MDECGHGRFQ (108 aa)) lie on the Cytoplasmic side of the membrane. Ser33 is modified (phosphoserine). Position 36 is a phosphothreonine (Thr36). Residues 109 to 129 (WILFFVLGLALMADGVEVFVV) traverse the membrane as a helical segment. Residues 130–148 (SFALPSAEKDMCLSSSKKG) are Extracellular-facing. Residues 149–169 (MLGMIVYLGMMAGAFILGGLA) form a helical membrane-spanning segment. At 170 to 182 (DKLGRKRVLSMSL) the chain is on the cytoplasmic side. A helical transmembrane segment spans residues 183–203 (AVNASFASLSSFVQGYGAFLF). The Extracellular portion of the chain corresponds to 204-205 (CR). Residues 206 to 226 (LISGIGIGGALPIVFAYFSEF) form a helical membrane-spanning segment. Over 227-237 (LSREKRGEHLS) the chain is Cytoplasmic. Residues 238 to 258 (WLGIFWMTGGLYASAMAWSII) form a helical membrane-spanning segment. The Extracellular segment spans residues 259–277 (PHYGWGFSMGTNYHFHSWR). A helical transmembrane segment spans residues 278–298 (VFVIVCALPCTVSMVALKFMP). The Cytoplasmic portion of the chain corresponds to 299 to 390 (ESPRFLLEMG…CVMGPYRMNT (92 aa)). A helical membrane pass occupies residues 391-411 (LILAVVWFAMAFSYYGLTVWF). Residues 412–535 (PDMIRYFQDE…CHMDLEQDND (124 aa)) lie on the Extracellular side of the membrane. Tyr423 carries the post-translational modification Phosphotyrosine. N-linked (GlcNAc...) asparagine glycosylation is found at Asn441, Asn491, and Asn516. Residues 536–556 (FLIYLVSFLGSLSVLPGNIIS) form a helical membrane-spanning segment. Over 557-565 (ALLMDRIGR) the chain is Cytoplasmic. A helical membrane pass occupies residues 566 to 586 (LKMIGGSMLISAVCCFFLFFG). The Extracellular segment spans residues 587 to 592 (NSESAM). The helical transmembrane segment at 593 to 613 (IGWQCLFCGTSIAAWNALDVI) threads the bilayer. At 614–626 (TVELYPTNQRATA) the chain is on the cytoplasmic side. A helical transmembrane segment spans residues 627 to 649 (FGILNGLCKFGAILGNTIFASFV). Residues 650–653 (GITK) are Extracellular-facing. Residues 654-672 (VVPILLAAASLVGGGLIAL) traverse the membrane as a helical segment. Topologically, residues 673 to 683 (RLPETREQVLM) are cytoplasmic.

The protein belongs to the major facilitator superfamily. In terms of assembly, interacts with SYT1 in a calcium-independent manner. Forms a complex with SYT1, syntaxin-1 and SNAP25. (Microbial infection) Interacts with C.botulinum neurotoxin type A2 (BoNT/A, botA). Interaction is improved by glycosylation of SV2. N-glycosylated. Post-translationally, the N-terminal cytoplasmic domain is phosphorylated by CK1.

It is found in the cytoplasmic vesicle. It localises to the secretory vesicle. The protein localises to the synaptic vesicle membrane. Its subcellular location is the acrosome. Functionally, probably plays a role in the control of regulated secretion in neural and endocrine cells. (Microbial infection) Receptor for the C.botulinum neurotoxin type A2 (BoNT/A, botA); glycosylation is not essential but enhances the interaction. Probably also serves as a receptor for the closely related C.botulinum neurotoxin type A1. This Homo sapiens (Human) protein is Synaptic vesicle glycoprotein 2B (SV2B).